A 124-amino-acid polypeptide reads, in one-letter code: Small ribosomal subunit protein uS12 (124 aa).

The disordered stretch occupies residues 1-28; it reads MPTIQQLIRTERQSSKAKTKSPALKSCP. Residue Asp-89 is modified to 3-methylthioaspartic acid. Positions 104–124 are disordered; the sequence is TAGVKDRRQSRSKYGAKTPKE.

This sequence belongs to the universal ribosomal protein uS12 family. Part of the 30S ribosomal subunit. Contacts proteins S8 and S17. May interact with IF1 in the 30S initiation complex.

With S4 and S5 plays an important role in translational accuracy. In terms of biological role, interacts with and stabilizes bases of the 16S rRNA that are involved in tRNA selection in the A site and with the mRNA backbone. Located at the interface of the 30S and 50S subunits, it traverses the body of the 30S subunit contacting proteins on the other side and probably holding the rRNA structure together. The combined cluster of proteins S8, S12 and S17 appears to hold together the shoulder and platform of the 30S subunit. The sequence is that of Small ribosomal subunit protein uS12 from Synechococcus sp. (strain WH7803).